The chain runs to 239 residues: RNA chaperone ProQ (239 aa).

Residues 107 to 177 are disordered; it reads KARVQAQRAE…RKPVAKPVQA (71 aa). Basic and acidic residues predominate over residues 115 to 137; sequence AEQRAKKREAENVAAGEKNERPT.

The protein belongs to the ProQ family.

It localises to the cytoplasm. In terms of biological role, RNA chaperone with significant RNA binding, RNA strand exchange and RNA duplexing activities. May regulate ProP activity through an RNA-based, post-transcriptional mechanism. The chain is RNA chaperone ProQ from Photorhabdus laumondii subsp. laumondii (strain DSM 15139 / CIP 105565 / TT01) (Photorhabdus luminescens subsp. laumondii).